Consider the following 404-residue polypeptide: MSTLFFTFSLLLLAPLLVISSIQDPELVVQDVHRSINASLTRRNLGYLSCGSGNPIDRLLAMQPQLGKKSPAFSYCAIGFGKNAIGGKNGRIYVVTDSGNDDPVNPKPGTLRHAVIQDEPLWIIFKRDMVIQLKQELVMNSYKTIDGRGASVHISGGPCITIHHTSNIIIHGINIHDCKQSGNGNIRDSPNHSGWWDVSDGDGISIFGGKNIWVDHCSLSNCHDGLIDAIHGSTAITISNNYFTHHDKVMLLGHSDSFTQDKGMQVTVAFNHFGEGLVQRMPRCRHGYFHVVNNDYTHWEMYAIGGSAAPTINSQGNRFLAPNEKYRKEVTKHEDAPESQWRSWNWRSEGDLMLNGAYFRQTGAGASSSSTYARASSLSARPSSLVGSITTNAGPVNCKKGSRC.

Positions 1-20 (MSTLFFTFSLLLLAPLLVIS) are cleaved as a signal peptide. Residue Asn-37 is glycosylated (N-linked (GlcNAc...) asparagine). Cys-159 and Cys-178 form a disulfide bridge. Residue Asn-191 is glycosylated (N-linked (GlcNAc...) asparagine). Ca(2+) is bound by residues Asp-200, Asp-202, Asp-224, and Asp-228. Arg-280 is a catalytic residue.

This sequence belongs to the polysaccharide lyase 1 family. It depends on Ca(2+) as a cofactor. In terms of tissue distribution, predominantly found in the pistil where it is found in the outer five layers of the strands of transmitting tissue within the upper two-thirds of the style. Found at much lower levels in the anthers and vegetative organs.

It is found in the secreted. It carries out the reaction Eliminative cleavage of (1-&gt;4)-alpha-D-galacturonan to give oligosaccharides with 4-deoxy-alpha-D-galact-4-enuronosyl groups at their non-reducing ends.. Its pathway is glycan metabolism; pectin degradation; 2-dehydro-3-deoxy-D-gluconate from pectin: step 2/5. Its function is as follows. May have a role in the development of the transmitting tissue of the style and/or in the events related to pollination such as some aspect in the facilitation of compatible pollen tube growth. The polypeptide is Probable pectate lyase 18 (Solanum lycopersicum (Tomato)).